The primary structure comprises 247 residues: Histone acetyltransferase MCC1 (247 aa).

Positions 25–198 constitute an N-acetyltransferase domain; sequence IHYRPINPND…DAFLFVYFIN (174 aa).

This sequence belongs to the acetyltransferase family.

The enzyme catalyses L-lysyl-[protein] + acetyl-CoA = N(6)-acetyl-L-lysyl-[protein] + CoA + H(+). Its function is as follows. Histone acetyltransferase that probably regulates acetylation status of histone H3 during meiosis. Histone acetylation may influence recombination and chromosome segregation. The sequence is that of Histone acetyltransferase MCC1 (MCC1) from Arabidopsis thaliana (Mouse-ear cress).